The following is a 445-amino-acid chain: MASNGVTNCNANANVWRFKGNGATSDAAAVTLRKLAFGMFKNCTMNSGKTILFPTPGEPSAHSNFRTCPEAEEAVAAAARSGMANSYAPSPGVFKARRAVAEYLNGELPTKLKAEDVYITGGCNQAIEIVIDSLAGNPSANILLPRPGYPHYDARAVYSGLEIRKYDLLPESDWEINLDGLEAAADENTVAMVIINPNNPCGNVYTYDHLNKVAEMARKLGIMIISDEVYDHVVYGDKPFIPMGKFASIAPVITLGSISKGWVNPGWRVGWIAMNDPNGIFVSTGVVQAIEDFLDLTPQPSFILQEALPDILEKTPKEFFEKKIKAMRRNVELSCERLKDIPCLFCPKKPESCSYLWLKLDTSMLNNIKNDFDFCTKLVSEESLILIPGVALGAENWVRISIGTDESVVQEIFDRLKGFYDRHAISKEAIKLSGHAINQIVVSVN.

It belongs to the class-I pyridoxal-phosphate-dependent aminotransferase family. The cofactor is pyridoxal 5'-phosphate. As to expression, expressed in roots, leaves and cauline leaves.

The polypeptide is Probable aminotransferase TAT3 (TAT3) (Arabidopsis thaliana (Mouse-ear cress)).